A 395-amino-acid polypeptide reads, in one-letter code: Phosphopentomutase (395 aa).

Mn(2+) is bound by residues Asp-10, Asp-294, His-299, Asp-335, His-336, and His-347.

It belongs to the phosphopentomutase family. Mn(2+) is required as a cofactor.

It localises to the cytoplasm. It catalyses the reaction 2-deoxy-alpha-D-ribose 1-phosphate = 2-deoxy-D-ribose 5-phosphate. It carries out the reaction alpha-D-ribose 1-phosphate = D-ribose 5-phosphate. It participates in carbohydrate degradation; 2-deoxy-D-ribose 1-phosphate degradation; D-glyceraldehyde 3-phosphate and acetaldehyde from 2-deoxy-alpha-D-ribose 1-phosphate: step 1/2. Its function is as follows. Isomerase that catalyzes the conversion of deoxy-ribose 1-phosphate (dRib-1-P) and ribose 1-phosphate (Rib-1-P) to deoxy-ribose 5-phosphate (dRib-5-P) and ribose 5-phosphate (Rib-5-P), respectively. In Actinobacillus succinogenes (strain ATCC 55618 / DSM 22257 / CCUG 43843 / 130Z), this protein is Phosphopentomutase.